Here is a 552-residue protein sequence, read N- to C-terminus: Protein FAM234A (552 aa).

A compositionally biased stretch (basic and acidic residues) spans 1–22 (MLDHKDLEAEIHPLKNEERKSQ). A disordered region spans residues 1–40 (MLDHKDLEAEIHPLKNEERKSQENLGNPSKNEDNVKSAPP). The Cytoplasmic segment spans residues 1 to 49 (MLDHKDLEAEIHPLKNEERKSQENLGNPSKNEDNVKSAPPQSRLSRCRA). Ser21 bears the Phosphoserine mark. The chain crosses the membrane as a helical; Signal-anchor for type II membrane protein span at residues 50-70 (AAFFLSLFLCLFVVFVVSFVI). Residues 71–552 (PCPDRPASQR…FSRLRYQSEA (482 aa)) are Extracellular-facing. 4 N-linked (GlcNAc...) asparagine glycosylation sites follow: Asn116, Asn314, Asn389, and Asn473.

It belongs to the FAM234 family.

It is found in the membrane. In Homo sapiens (Human), this protein is Protein FAM234A.